Consider the following 636-residue polypeptide: Chaperone protein HtpG (636 aa).

The a; substrate-binding stretch occupies residues Met-1–Arg-344. The b stretch occupies residues Glu-345–Gln-561. Residues Leu-562–Ala-636 form a c region.

It belongs to the heat shock protein 90 family. In terms of assembly, homodimer.

It localises to the cytoplasm. Molecular chaperone. Has ATPase activity. This chain is Chaperone protein HtpG, found in Xylella fastidiosa (strain Temecula1 / ATCC 700964).